The sequence spans 618 residues: 1-deoxy-D-xylulose-5-phosphate synthase (618 aa).

Residues histidine 74 and 115 to 117 (GHS) contribute to the thiamine diphosphate site. Aspartate 146 contributes to the Mg(2+) binding site. Residues 147–148 (GA), asparagine 175, tyrosine 286, and glutamate 366 contribute to the thiamine diphosphate site. Asparagine 175 contributes to the Mg(2+) binding site.

This sequence belongs to the transketolase family. DXPS subfamily. Homodimer. Mg(2+) serves as cofactor. Thiamine diphosphate is required as a cofactor.

The catalysed reaction is D-glyceraldehyde 3-phosphate + pyruvate + H(+) = 1-deoxy-D-xylulose 5-phosphate + CO2. The protein operates within metabolic intermediate biosynthesis; 1-deoxy-D-xylulose 5-phosphate biosynthesis; 1-deoxy-D-xylulose 5-phosphate from D-glyceraldehyde 3-phosphate and pyruvate: step 1/1. Functionally, catalyzes the acyloin condensation reaction between C atoms 2 and 3 of pyruvate and glyceraldehyde 3-phosphate to yield 1-deoxy-D-xylulose-5-phosphate (DXP). This chain is 1-deoxy-D-xylulose-5-phosphate synthase, found in Clostridium tetani (strain Massachusetts / E88).